We begin with the raw amino-acid sequence, 349 residues long: Phosphoribosylformylglycinamidine cyclo-ligase (349 aa).

The protein belongs to the AIR synthase family.

The protein resides in the cytoplasm. The enzyme catalyses 2-formamido-N(1)-(5-O-phospho-beta-D-ribosyl)acetamidine + ATP = 5-amino-1-(5-phospho-beta-D-ribosyl)imidazole + ADP + phosphate + H(+). It participates in purine metabolism; IMP biosynthesis via de novo pathway; 5-amino-1-(5-phospho-D-ribosyl)imidazole from N(2)-formyl-N(1)-(5-phospho-D-ribosyl)glycinamide: step 2/2. In Bordetella avium (strain 197N), this protein is Phosphoribosylformylglycinamidine cyclo-ligase.